The primary structure comprises 141 residues: VLSPADKKNVKDCWEKIGGHGAEYGAEALERMFLSFPTTKTYFPHFDLSHGSAQVQGHGKKVADALANAAAHVDDLPGALSALSDLHAHKLRVDPVNFKLLSHCLLVTLAAHHPAEFTPAVHASLDKFLASVSTVLTSKYR.

The Globin domain occupies 1-141; the sequence is VLSPADKKNV…VSTVLTSKYR (141 aa). At Ser3 the chain carries Phosphoserine. Lys7 and Lys11 each carry N6-succinyllysine. Lys16 is modified (N6-acetyllysine; alternate). Residue Lys16 is modified to N6-succinyllysine; alternate. The residue at position 24 (Tyr24) is a Phosphotyrosine. Ser35 bears the Phosphoserine mark. The residue at position 40 (Lys40) is an N6-succinyllysine. Ser49 carries the post-translational modification Phosphoserine. His58 is a binding site for O2. His87 is a heme b binding site. Ser102 carries the phosphoserine modification. At Thr108 the chain carries Phosphothreonine. Residues Ser124 and Ser131 each carry the phosphoserine modification. Phosphothreonine is present on residues Thr134 and Thr137. A Phosphoserine modification is found at Ser138.

It belongs to the globin family. As to quaternary structure, heterotetramer of two alpha chains and two beta chains. Red blood cells.

Functionally, involved in oxygen transport from the lung to the various peripheral tissues. Hemopressin acts as an antagonist peptide of the cannabinoid receptor CNR1. Hemopressin-binding efficiently blocks cannabinoid receptor CNR1 and subsequent signaling. The polypeptide is Hemoglobin subunit alpha (HBA) (Spermophilus citellus (European ground squirrel)).